Consider the following 195-residue polypeptide: Probable nicotinate-nucleotide adenylyltransferase (195 aa).

Belongs to the NadD family.

It carries out the reaction nicotinate beta-D-ribonucleotide + ATP + H(+) = deamido-NAD(+) + diphosphate. The protein operates within cofactor biosynthesis; NAD(+) biosynthesis; deamido-NAD(+) from nicotinate D-ribonucleotide: step 1/1. Catalyzes the reversible adenylation of nicotinate mononucleotide (NaMN) to nicotinic acid adenine dinucleotide (NaAD). This chain is Probable nicotinate-nucleotide adenylyltransferase, found in Opitutus terrae (strain DSM 11246 / JCM 15787 / PB90-1).